Consider the following 79-residue polypeptide: Reactive oxygen species modulator 1 (79 aa).

A helical transmembrane segment spans residues 23 to 43; that stretch reads FMMGFAVGMAAGALFGTFSCL. The tract at residues 42–60 is sufficient for antibacterial activity; sequence CLRFGMRGRELMGGVGKTM.

It belongs to the MGR2 family.

It is found in the mitochondrion inner membrane. Its function is as follows. Has antibacterial activity against a variety of bacteria including S.aureus, P.aeruginosa and M.tuberculosis. Acts by inducing bacterial membrane breakage. Induces production of reactive oxygen species (ROS) which are necessary for cell proliferation. May play a role in inducing oxidative DNA damage and replicative senescence. May play a role in the coordination of mitochondrial morphology and cell proliferation. In Xenopus tropicalis (Western clawed frog), this protein is Reactive oxygen species modulator 1 (romo1).